The chain runs to 396 residues: MAKILAVNAGSSTLKWKLFDMPAEVQLAEGLVDRLGQPQSKVKIKYGDGQKYESDTPIANYQEAVASLMGNIKALGLVEHLHEITGVGHRVVAGGETFAESVVVDDATLLQIQNLRDYAPLHNPVEADYIDVFKKMMPWATEVAVFDTAFHQTMQPENFLYSIPYDYYKKYGARKYGAHGTSVRYVSARAAEMLNKPLEDLRMIVMHLGSGSSVTAVQGGQSIDTSMGFTPLAGVTMGTRSGDIDPSLVAYLMKKLDVPDVGQMIHILNNDSGLLGISGISNDMRDLEADEDTKPRAKLALDIFVNRVVKYVGSYAALMDGVDVLVFTAGIGENGDEIRDKIMRSLDYLGAKIDNDINYKSHGVEADLSTPDSTVKTLLVPTNEELMIVRDVMALS.

Position 8 (Asn8) interacts with Mg(2+). Lys15 lines the ATP pocket. Position 90 (Arg90) interacts with substrate. The Proton donor/acceptor role is filled by Asp147. ATP is bound by residues 207–211 (HLGSG), 283–285 (DMR), and 330–334 (GIGEN). Glu384 contributes to the Mg(2+) binding site.

It belongs to the acetokinase family. In terms of assembly, homodimer. The cofactor is Mg(2+). It depends on Mn(2+) as a cofactor.

It is found in the cytoplasm. The enzyme catalyses acetate + ATP = acetyl phosphate + ADP. The protein operates within metabolic intermediate biosynthesis; acetyl-CoA biosynthesis; acetyl-CoA from acetate: step 1/2. Its function is as follows. Catalyzes the formation of acetyl phosphate from acetate and ATP. Can also catalyze the reverse reaction. This is Acetate kinase from Lacticaseibacillus paracasei (strain ATCC 334 / BCRC 17002 / CCUG 31169 / CIP 107868 / KCTC 3260 / NRRL B-441) (Lactobacillus paracasei).